A 584-amino-acid chain; its full sequence is Endogenous retrovirus group FC1 Env polyprotein (584 aa).

A signal peptide spans M1–S22. The Extracellular portion of the chain corresponds to N23–P514. N-linked (GlcNAc...) asparagine glycosylation is found at N69 and N247. Positions C251–C254 match the CXXC motif. 8 N-linked (GlcNAc...) asparagine glycosylation sites follow: N272, N276, N308, N313, N322, N334, N342, and N346. Residues P388 to I413 are fusion peptide. Positions M449–T465 match the CKS-17 motif. Cysteines 466 and 473 form a disulfide. Residues C466 to C474 carry the CX6CC motif. N478 is a glycosylation site (N-linked (GlcNAc...) asparagine). The chain crosses the membrane as a helical span at residues L515–L540. Residues K541 to R584 are Cytoplasmic-facing.

It belongs to the gamma type-C retroviral envelope protein family. HERV class-I F(c)1 env subfamily. As to quaternary structure, the surface (SU) and transmembrane (TM) proteins form a heterodimer. SU and TM are attached by noncovalent interactions or by a labile interchain disulfide bond. Post-translationally, specific enzymatic cleavages in vivo yield the mature SU and TM proteins. In terms of processing, the CXXC motif is highly conserved across a broad range of retroviral envelope proteins. It is thought to participate in the formation of a labile disulfide bond possibly with the CX6CC motif present in the transmembrane protein.

It localises to the virion. Its subcellular location is the cell membrane. Its function is as follows. Retroviral envelope proteins mediate receptor recognition and membrane fusion during early infection. Endogenous envelope proteins may have kept, lost or modified their original function during evolution. This endogenous envelope protein has lost its original fusogenic properties. SU mediates receptor recognition. Functionally, TM anchors the envelope heterodimer to the viral membrane through one transmembrane domain. The other hydrophobic domain, called fusion peptide, mediates fusion of the viral membrane with the target cell membrane. The chain is Endogenous retrovirus group FC1 Env polyprotein (ERVFC1) from Pan troglodytes (Chimpanzee).